A 297-amino-acid polypeptide reads, in one-letter code: Coatomer subunit epsilon-2 (297 aa).

The protein belongs to the COPE family. Oligomeric complex that consists of at least the alpha, beta, beta', gamma, delta, epsilon and zeta subunits.

The protein resides in the cytoplasm. Its subcellular location is the golgi apparatus membrane. The protein localises to the cytoplasmic vesicle. It localises to the COPI-coated vesicle membrane. The coatomer is a cytosolic protein complex that binds to dilysine motifs and reversibly associates with Golgi non-clathrin-coated vesicles, which further mediate biosynthetic protein transport from the ER, via the Golgi up to the trans Golgi network. The coatomer complex is required for budding from Golgi membranes, and is essential for the retrograde Golgi-to-ER transport of dilysine-tagged proteins. The chain is Coatomer subunit epsilon-2 from Oryza sativa subsp. indica (Rice).